A 459-amino-acid chain; its full sequence is Glycosyl hydrolase family 109 protein (459 aa).

The tat-type signal signal peptide spans 1-31 (MHNIHRRNFLKAAGAATAGLVTANIALNAYA). Residues 64-65 (ER), Asp86, 135-138 (WEWH), 155-156 (EV), and Asn184 contribute to the NAD(+) site. Substrate is bound by residues Tyr213, Arg232, 244–247 (YPTH), and Tyr326. Tyr244 contributes to the NAD(+) binding site.

It belongs to the Gfo/Idh/MocA family. Glycosyl hydrolase 109 subfamily. The cofactor is NAD(+). Predicted to be exported by the Tat system. The position of the signal peptide cleavage has not been experimentally proven.

Functionally, glycosidase. The chain is Glycosyl hydrolase family 109 protein from Shewanella baltica (strain OS195).